We begin with the raw amino-acid sequence, 37 residues long: Delta-amaurobitoxin-Pl1a (37 aa).

Disulfide bonds link cysteine 2–cysteine 18, cysteine 9–cysteine 23, cysteine 17–cysteine 33, and cysteine 25–cysteine 31. The residue at position 37 (serine 37) is a Serine amide.

The protein belongs to the neurotoxin 07 (Beta/delta-agtx) family. 02 (aga-3) subfamily. Expressed by the venom gland.

Its subcellular location is the secreted. Functionally, binds at site 4 of sodium channels (Nav) and inhibits the fast inactivation of cockroach channels. This toxin is active only on insects. Has a potent activity against S.litura larvae. In Pireneitega luctuosa (Tangled nest spider), this protein is Delta-amaurobitoxin-Pl1a.